Consider the following 549-residue polypeptide: Serine/threonine-protein phosphatase PPQ (549 aa).

The span at 1–13 shows a compositional bias: polar residues; that stretch reads MRRSPSRSNNNFA. Disordered regions lie at residues 1 to 50, 64 to 85, 133 to 158, and 189 to 219; these read MRRS…RSLP, YNTL…DNLL, TSST…NYSS, and SRVK…PKSS. Composition is skewed to low complexity over residues 16–32 and 68–83; these read NCST…TTPS and ASAG…SNDN. Residues 205–217 show a composition bias toward polar residues; the sequence is APSSPTSGIPNPK. Mn(2+) is bound by residues D301, H303, D329, and N361. H362 serves as the catalytic Proton donor. Mn(2+) is bound by residues H410 and H485.

Belongs to the PPP phosphatase family. PP-Z subfamily. Mn(2+) is required as a cofactor.

The enzyme catalyses O-phospho-L-seryl-[protein] + H2O = L-seryl-[protein] + phosphate. The catalysed reaction is O-phospho-L-threonyl-[protein] + H2O = L-threonyl-[protein] + phosphate. Its function is as follows. Phosphatase involved in the regulation of protein synthesis. Affects translational accuracy. The protein is Serine/threonine-protein phosphatase PPQ (PPQ1) of Saccharomyces cerevisiae (strain ATCC 204508 / S288c) (Baker's yeast).